The primary structure comprises 262 residues: Light-harvesting complex-like protein 3 isotype 1, chloroplastic (262 aa).

The transit peptide at 1 to 39 directs the protein to the chloroplast; the sequence is MALFSPPISSSSLQNPNFIPKFSFSLLSSNRFSLLSVTR. The next 2 helical transmembrane spans lie at 180–200 and 202–222; these read AAMI…VGLV and QMGN…VLFI.

Interacts with GGR. Forms homodimer, and heterodimer with LIL3.2. Expressed in photosynthetically active tissues (at protein level).

The protein localises to the plastid. It localises to the chloroplast thylakoid membrane. Light-harvesting-like protein required for biosynthesis of phytylated chlorophylls and alpha-tocopherol in green seedlings. Functions by anchoring geranylgeranyl reductase (GGR) in the thylakoid membrane, leading to the stabilization of GGR activity. Binds chlorophyll a in the thylakoid membrane. Plays a role in the regulation of chlorophyll biosynthesis under light stress and under standard growth conditions. The sequence is that of Light-harvesting complex-like protein 3 isotype 1, chloroplastic (LIL3.1) from Arabidopsis thaliana (Mouse-ear cress).